The primary structure comprises 721 residues: Catalase-peroxidase (721 aa).

A cross-link (tryptophyl-tyrosyl-methioninium (Trp-Tyr) (with M-249)) is located at residues tryptophan 95 to tyrosine 223. Histidine 96 functions as the Proton acceptor in the catalytic mechanism. The segment at residues tyrosine 223–methionine 249 is a cross-link (tryptophyl-tyrosyl-methioninium (Tyr-Met) (with W-95)). Histidine 264 lines the heme b pocket.

It belongs to the peroxidase family. Peroxidase/catalase subfamily. As to quaternary structure, homodimer or homotetramer. The cofactor is heme b. Formation of the three residue Trp-Tyr-Met cross-link is important for the catalase, but not the peroxidase activity of the enzyme.

It carries out the reaction H2O2 + AH2 = A + 2 H2O. The enzyme catalyses 2 H2O2 = O2 + 2 H2O. Bifunctional enzyme with both catalase and broad-spectrum peroxidase activity. The polypeptide is Catalase-peroxidase (Parvibaculum lavamentivorans (strain DS-1 / DSM 13023 / NCIMB 13966)).